Reading from the N-terminus, the 277-residue chain is 4-hydroxy-tetrahydrodipicolinate reductase (277 aa).

NAD(+) contacts are provided by residues 11-16 (GALGRM) and 110-112 (GTT). The Proton donor/acceptor role is filled by His-166. His-167 provides a ligand contact to (S)-2,3,4,5-tetrahydrodipicolinate. Lys-170 (proton donor) is an active-site residue. Position 176–177 (176–177 (GT)) interacts with (S)-2,3,4,5-tetrahydrodipicolinate.

It belongs to the DapB family.

Its subcellular location is the cytoplasm. It carries out the reaction (S)-2,3,4,5-tetrahydrodipicolinate + NAD(+) + H2O = (2S,4S)-4-hydroxy-2,3,4,5-tetrahydrodipicolinate + NADH + H(+). It catalyses the reaction (S)-2,3,4,5-tetrahydrodipicolinate + NADP(+) + H2O = (2S,4S)-4-hydroxy-2,3,4,5-tetrahydrodipicolinate + NADPH + H(+). The protein operates within amino-acid biosynthesis; L-lysine biosynthesis via DAP pathway; (S)-tetrahydrodipicolinate from L-aspartate: step 4/4. In terms of biological role, catalyzes the conversion of 4-hydroxy-tetrahydrodipicolinate (HTPA) to tetrahydrodipicolinate. The polypeptide is 4-hydroxy-tetrahydrodipicolinate reductase (Parasynechococcus marenigrum (strain WH8102)).